The chain runs to 1693 residues: Putative stoned B-like protein (1693 aa).

Residues 1 to 12 show a composition bias toward basic and acidic residues; that stretch reads MSWRDRDFDPHG. 7 disordered regions span residues 1-54, 222-322, 334-371, 383-438, 585-807, 841-869, and 899-1024; these read MSWR…ELPA, NQIP…VEKS, TVEITSPDAPHQGAFHDNTPKEPKVVEEEEDDDLPTFS, KEMT…DPNA, GDYH…TSAA, KKMEKLQKKKLKQQGKKAATPTLEPDEED, and PVKE…FVAD. Over residues 26-39 the composition is skewed to low complexity; that stretch reads SSSERAASMRAMRS. 2 stretches are compositionally biased toward basic and acidic residues: residues 279–301 and 311–322; these read MEDKMEQAEEKARKEEKKEKEET and TTEKHQNEVEKS. Positions 360–371 are enriched in acidic residues; the sequence is EEEEDDDLPTFS. Residues 393–412 are compositionally biased toward basic and acidic residues; that stretch reads ENVENEKQEDTHISEGHVEY. Residues 596 to 615 are compositionally biased toward polar residues; that stretch reads DENSTSAISGYEQNGASTSL. Residues 632–643 are compositionally biased toward low complexity; the sequence is YYQGQEYQQEYY. The short motif at 684–686 is the DPF 1 element; the sequence is DPF. A compositionally biased stretch (low complexity) spans 708–722; sequence SPTPEASSSTGTSAP. The segment covering 745-760 has biased composition (pro residues); that stretch reads PPRPPPAARPPPPRPA. The span at 786–807 shows a compositional bias: polar residues; sequence KVSTAVKSTESTLKNLEETSAA. Over residues 899-913 the composition is skewed to basic and acidic residues; that stretch reads PVKEIKKAPEIRRVD. 3 consecutive short sequence motifs (DPF) follow at residues 1006-1008, 1024-1026, and 1039-1041; these read DPF. The disordered stretch occupies residues 1062–1095; sequence ANAENEDDFYNGRQSPTLSTPTPEGGSPISQQRP. Polar residues predominate over residues 1073–1095; sequence GRQSPTLSTPTPEGGSPISQQRP. Positions 1136 to 1283 constitute an SHD domain; sequence GWDLMVRHPI…KCKITRTAKP (148 aa). The MHD domain maps to 1287-1606; sequence QDEVQIHCYD…AKYQYKVEID (320 aa). A disordered region spans residues 1633-1693; it reads ELHQPTFNPS…IQIDMKNYGY (61 aa). Residues 1637 to 1651 show a composition bias toward polar residues; sequence PTFNPSTQESDTQQG.

This sequence belongs to the Stoned B family.

It is found in the cytoplasm. Functionally, potential adapter protein, which may be involved in endocytic vesicle recycling of synaptic vesicles. The polypeptide is Putative stoned B-like protein (unc-41) (Caenorhabditis elegans).